The chain runs to 619 residues: 1-deoxy-D-xylulose-5-phosphate synthase (619 aa).

Thiamine diphosphate contacts are provided by residues His-80 and 121 to 123 (GHS). Position 152 (Asp-152) interacts with Mg(2+). Thiamine diphosphate-binding positions include 153–154 (GA), Asn-181, Tyr-288, and Glu-370. Asn-181 contributes to the Mg(2+) binding site.

Belongs to the transketolase family. DXPS subfamily. As to quaternary structure, homodimer. Requires Mg(2+) as cofactor. Thiamine diphosphate is required as a cofactor.

It carries out the reaction D-glyceraldehyde 3-phosphate + pyruvate + H(+) = 1-deoxy-D-xylulose 5-phosphate + CO2. Its pathway is metabolic intermediate biosynthesis; 1-deoxy-D-xylulose 5-phosphate biosynthesis; 1-deoxy-D-xylulose 5-phosphate from D-glyceraldehyde 3-phosphate and pyruvate: step 1/1. Its function is as follows. Catalyzes the acyloin condensation reaction between C atoms 2 and 3 of pyruvate and glyceraldehyde 3-phosphate to yield 1-deoxy-D-xylulose-5-phosphate (DXP). In Yersinia pestis (strain Pestoides F), this protein is 1-deoxy-D-xylulose-5-phosphate synthase.